A 344-amino-acid chain; its full sequence is Fructose-1,6-bisphosphatase class 1 (344 aa).

Glu-92, Asp-115, Leu-117, and Asp-118 together coordinate Mg(2+). Residues 118-121 (DGSS), Asn-211, Tyr-244, and Lys-274 each bind substrate. Glu-280 contacts Mg(2+).

The protein belongs to the FBPase class 1 family. In terms of assembly, homotetramer. Mg(2+) serves as cofactor.

It localises to the cytoplasm. The enzyme catalyses beta-D-fructose 1,6-bisphosphate + H2O = beta-D-fructose 6-phosphate + phosphate. It functions in the pathway carbohydrate biosynthesis; gluconeogenesis. This is Fructose-1,6-bisphosphatase class 1 from Aeromonas hydrophila subsp. hydrophila (strain ATCC 7966 / DSM 30187 / BCRC 13018 / CCUG 14551 / JCM 1027 / KCTC 2358 / NCIMB 9240 / NCTC 8049).